The primary structure comprises 211 residues: Small ribosomal subunit protein uS4 (211 aa).

Residues 27–48 are disordered; it reads GRKVLERRGSQPPGQHGASVRR. Residues 99–162 enclose the S4 RNA-binding domain; sequence RRLDNVVFRL…RKRDYFKDLE (64 aa).

This sequence belongs to the universal ribosomal protein uS4 family. In terms of assembly, part of the 30S ribosomal subunit. Contacts protein S5. The interaction surface between S4 and S5 is involved in control of translational fidelity.

Functionally, one of the primary rRNA binding proteins, it binds directly to 16S rRNA where it nucleates assembly of the body of the 30S subunit. Its function is as follows. With S5 and S12 plays an important role in translational accuracy. This is Small ribosomal subunit protein uS4 from Herpetosiphon aurantiacus (strain ATCC 23779 / DSM 785 / 114-95).